The sequence spans 317 residues: Melanocyte-stimulating hormone receptor (317 aa).

Residues 1–37 are Extracellular-facing; it reads MPVLGSQRRLLGSLNCTPPATFSLTLAPNRTGPQCLE. Asparagine 29 carries N-linked (GlcNAc...) asparagine glycosylation. Residues 38-63 form a helical membrane-spanning segment; that stretch reads VSIPDGLFLSLGLVSLVENVLVVAAI. The Cytoplasmic portion of the chain corresponds to 64–72; sequence AKNRNLHSP. A helical membrane pass occupies residues 73–93; the sequence is MYYFICCLAVSDLLVSVSNVL. The Extracellular portion of the chain corresponds to 94-118; sequence ETAVMLLLEAGALAARAAVVQQLDN. A helical transmembrane segment spans residues 119–140; that stretch reads VIDVLICGSMVSSLCFLGAIAM. At 141–163 the chain is on the cytoplasmic side; sequence DRYISIFYALRYHSVVTLPRAWR. A helical transmembrane segment spans residues 164–183; that stretch reads IIAAIWVASILTSLLFITYY. Over 184–191 the chain is Extracellular; the sequence is NHTVVLLC. Residues 192-211 form a helical membrane-spanning segment; that stretch reads LVGFFIAMLALMAILYVHML. Over 212–240 the chain is Cytoplasmic; it reads ARACQHARDIARLQKRQHPIHQGFGLKGA. Residues 241 to 266 traverse the membrane as a helical segment; sequence ATLTILLGVFFLCWGPFFLHLSLIVL. Residues 267–279 lie on the Extracellular side of the membrane; the sequence is CPQHPTCGCIFKN. Residues 280 to 300 traverse the membrane as a helical segment; sequence FNLFLALIICNAIVDPLIYAF. The Cytoplasmic portion of the chain corresponds to 301–317; the sequence is RSQELRKTLQEVLQCSW. Cysteine 315 carries S-palmitoyl cysteine lipidation.

Belongs to the G-protein coupled receptor 1 family. In terms of assembly, interacts with MGRN1, but does not undergo MGRN1-mediated ubiquitination; this interaction competes with GNAS-binding and thus inhibits agonist-induced cAMP production. Interacts with OPN3; the interaction results in a decrease in MC1R-mediated cAMP signaling and ultimately a decrease in melanin production in melanocytes.

Its subcellular location is the cell membrane. Functionally, receptor for MSH (alpha, beta and gamma) and ACTH. The activity of this receptor is mediated by G proteins which activate adenylate cyclase. Mediates melanogenesis, the production of eumelanin (black/brown) and phaeomelanin (red/yellow), via regulation of cAMP signaling in melanocytes. This chain is Melanocyte-stimulating hormone receptor (MC1R), found in Alces alces alces (European moose).